A 376-amino-acid chain; its full sequence is 1-deoxy-D-xylulose 5-phosphate reductoisomerase (376 aa).

NADPH contacts are provided by T12, G13, S14, I15, R39, Q40, and N110. K111 is a binding site for 1-deoxy-D-xylulose 5-phosphate. E112 serves as a coordination point for NADPH. Residue D136 participates in Mn(2+) binding. 4 residues coordinate 1-deoxy-D-xylulose 5-phosphate: S137, E138, S162, and H185. A Mn(2+)-binding site is contributed by E138. G191 is an NADPH binding site. 1-deoxy-D-xylulose 5-phosphate is bound by residues S198, N203, K204, and E207. Mn(2+) is bound at residue E207.

It belongs to the DXR family. Mg(2+) is required as a cofactor. The cofactor is Mn(2+).

It catalyses the reaction 2-C-methyl-D-erythritol 4-phosphate + NADP(+) = 1-deoxy-D-xylulose 5-phosphate + NADPH + H(+). The protein operates within isoprenoid biosynthesis; isopentenyl diphosphate biosynthesis via DXP pathway; isopentenyl diphosphate from 1-deoxy-D-xylulose 5-phosphate: step 1/6. Functionally, catalyzes the NADPH-dependent rearrangement and reduction of 1-deoxy-D-xylulose-5-phosphate (DXP) to 2-C-methyl-D-erythritol 4-phosphate (MEP). This Treponema pallidum (strain Nichols) protein is 1-deoxy-D-xylulose 5-phosphate reductoisomerase.